A 178-amino-acid chain; its full sequence is Large ribosomal subunit protein eL20 (178 aa).

The protein belongs to the eukaryotic ribosomal protein eL20 family.

In Castanea sativa (Sweet chestnut), this protein is Large ribosomal subunit protein eL20 (RPL18A).